A 310-amino-acid polypeptide reads, in one-letter code: Tagatose-6-phosphate kinase (310 aa).

It belongs to the carbohydrate kinase PfkB family. LacC subfamily.

The catalysed reaction is D-tagatofuranose 6-phosphate + ATP = D-tagatofuranose 1,6-bisphosphate + ADP + H(+). It participates in carbohydrate metabolism; D-tagatose 6-phosphate degradation; D-glyceraldehyde 3-phosphate and glycerone phosphate from D-tagatose 6-phosphate: step 1/2. The protein is Tagatose-6-phosphate kinase of Staphylococcus aureus (strain MRSA252).